Here is a 363-residue protein sequence, read N- to C-terminus: Protein RecA (363 aa).

79 to 86 (GPESSGKT) contributes to the ATP binding site.

The protein belongs to the RecA family.

The protein resides in the cytoplasm. Functionally, can catalyze the hydrolysis of ATP in the presence of single-stranded DNA, the ATP-dependent uptake of single-stranded DNA by duplex DNA, and the ATP-dependent hybridization of homologous single-stranded DNAs. It interacts with LexA causing its activation and leading to its autocatalytic cleavage. The protein is Protein RecA of Borrelia duttonii (strain Ly).